Consider the following 382-residue polypeptide: Threonine synthase (382 aa).

The residue at position 93 (Lys93) is an N6-(pyridoxal phosphate)lysine. Pyridoxal 5'-phosphate-binding positions include Asn119, 219 to 223 (GNAGN), and Thr347.

This sequence belongs to the threonine synthase family. Pyridoxal 5'-phosphate serves as cofactor.

The enzyme catalyses O-phospho-L-homoserine + H2O = L-threonine + phosphate. The protein operates within amino-acid biosynthesis; L-threonine biosynthesis; L-threonine from L-aspartate: step 5/5. Catalyzes the gamma-elimination of phosphate from L-phosphohomoserine and the beta-addition of water to produce L-threonine. The polypeptide is Threonine synthase (thrC) (Synechocystis sp. (strain ATCC 27184 / PCC 6803 / Kazusa)).